Here is a 368-residue protein sequence, read N- to C-terminus: uncharacterized protein (368 aa).

5 consecutive transmembrane segments (helical) span residues 22 to 42 (VAGI…FTLI), 74 to 94 (FVKP…LLVL), 104 to 124 (FLKT…LNLF), 144 to 164 (VGDF…GASL), and 168 to 188 (WGVN…AVSL).

The protein belongs to the MscS (TC 1.A.23) family.

It is found in the cell membrane. This is an uncharacterized protein from Aquifex aeolicus (strain VF5).